Consider the following 109-residue polypeptide: Resistin (109 aa).

The N-terminal stretch at 1–18 is a signal peptide; sequence MKALSFLFIPVLGLLVCG. 5 cysteine pairs are disulfide-bonded: Cys-51/Cys-104, Cys-63/Cys-103, Cys-72/Cys-89, Cys-74/Cys-91, and Cys-78/Cys-93.

The protein belongs to the resistin/FIZZ family. Homodimer; disulfide-linked.

Its subcellular location is the secreted. Functionally, hormone that seems to suppress insulin ability to stimulate glucose uptake into adipose cells. Potentially links obesity to diabetes. The polypeptide is Resistin (RETN) (Bos taurus (Bovine)).